A 357-amino-acid chain; its full sequence is O-methyltransferase 1, chloroplastic (357 aa).

The transit peptide at 1–53 (MPVLPWLAAAATTPVRRSPPLPATPRALLRLPASSFPPWSNCAKSGLPPRGPF) directs the protein to the chloroplast. Residues 50-71 (RGPFATAADTPLGGSLPEPEEE) are disordered.

Belongs to the methyltransferase superfamily. LCMT family. As to expression, expressed in roots, leaf sheaths, flag leaves and panicles.

Its subcellular location is the plastid. It is found in the chloroplast. It catalyses the reaction N-acetylserotonin + S-adenosyl-L-methionine = melatonin + S-adenosyl-L-homocysteine + H(+). The protein operates within aromatic compound metabolism; melatonin biosynthesis; melatonin from serotonin: step 1/2. Functionally, involved in melatonin biosynthesis. Can function as acetylserotonin O-methyltransferase. Catalyzes the transfer of a methyl group onto N-acetylserotonin, producing melatonin (N-acetyl-5-methoxytryptamine). Involved in the regulation of jasmonate- and brassinosteroid-mediated plant growth and defense responses. The sequence is that of O-methyltransferase 1, chloroplastic from Oryza sativa subsp. japonica (Rice).